The following is a 194-amino-acid chain: MLNVLIFGAPGSGKGTQSEELIRRYGFRHISTGELLRAEIKAQTELGQAAAGYINEGHLVPDSLIVDMMEKLISTLVDTEGIIFDGFPRTIPQAEAMETMLAHHGWKVDIVLNLQVPEEMLIERLLNRGKVSGRSDDNIETIRKRLDVYANETAPLVDFFTRKNVLHNVVGTGTIEEIALRIAPIVDKFRKVSN.

11 to 16 (GSGKGT) lines the ATP pocket. Residues 31–60 (STGELLRAEIKAQTELGQAAAGYINEGHLV) are NMP. AMP contacts are provided by residues T32, R37, 58-60 (HLV), 86-89 (GFPR), and Q93. The tract at residues 127–137 (NRGKVSGRSDD) is LID. R128 lines the ATP pocket. 2 residues coordinate AMP: R134 and R145. Residue G173 participates in ATP binding.

This sequence belongs to the adenylate kinase family. In terms of assembly, monomer.

It is found in the cytoplasm. It carries out the reaction AMP + ATP = 2 ADP. It functions in the pathway purine metabolism; AMP biosynthesis via salvage pathway; AMP from ADP: step 1/1. In terms of biological role, catalyzes the reversible transfer of the terminal phosphate group between ATP and AMP. Plays an important role in cellular energy homeostasis and in adenine nucleotide metabolism. This chain is Adenylate kinase, found in Porphyromonas gingivalis (strain ATCC BAA-308 / W83).